A 240-amino-acid polypeptide reads, in one-letter code: Bactofilin BacP (240 aa).

The segment at 116 to 240 is interacts with PadC; that stretch reads DVEPGRLPAE…KKVVVKKKTR (125 aa). Residues 117–240 form a disordered region; the sequence is VEPGRLPAER…KKVVVKKKTR (124 aa). Residues 126-150 show a composition bias toward low complexity; the sequence is RPAVVRPTAVTRPTATPARPTIPAA. Positions 151-173 are enriched in pro residues; that stretch reads RPMPPPPPSRPTPPPPPARPSAP. A compositionally biased stretch (basic residues) spans 229-240; sequence AKKKVVVKKKTR.

It belongs to the bactofilin family. As to quaternary structure, interacts with BacN and probably also BacO, the 3 proteins colocalize as an extended structure. Interacts with PadC.

It localises to the cytoplasm. It is found in the cytoskeleton. In terms of biological role, a non-essential component of the chromosome segregation machinery. Positions the ParA-ParB-parS chromosome segregation machinery within the cell; BacP seems to be the most important bactofilin in this process. Forms a heteropolymeric, subpolar scaffold in the cell; BacP probably forms the core, BacO contributes to position and integrity while BacN does not seem to contribute to assembly. The polypeptide is Bactofilin BacP (Myxococcus xanthus (strain DK1622)).